We begin with the raw amino-acid sequence, 23 residues long: SV40 early leader protein (23 aa).

Residues 1 to 23 are disordered; that stretch reads MQRPRPPRPLSYSRSSEEAFLEA.

This sequence belongs to the polyomavirus early leader protein family.

Functionally, may play a role in the lytic cycle. The chain is SV40 early leader protein from Macaca (macaques).